The sequence spans 135 residues: MKKLTFSFISPERPIVQNQEADFVALPAFEGEMGVLPGHVNSVVILMPGFVRFKNNGEEKEFAIIDGFAEVFKDHIDVFASEASLSEEKQSEEQKQRLERAKKALSSQDADIDIELAEIQLKTQILKMKMKKRKM.

Positions 84 to 107 are disordered; sequence SLSEEKQSEEQKQRLERAKKALSS. Residues 86–102 are compositionally biased toward basic and acidic residues; sequence SEEKQSEEQKQRLERAK.

Belongs to the ATPase epsilon chain family. F-type ATPases have 2 components, CF(1) - the catalytic core - and CF(0) - the membrane proton channel. CF(1) has five subunits: alpha(3), beta(3), gamma(1), delta(1), epsilon(1). CF(0) has three main subunits: a, b and c.

It is found in the cell membrane. Produces ATP from ADP in the presence of a proton gradient across the membrane. In Elusimicrobium minutum (strain Pei191), this protein is ATP synthase epsilon chain.